A 186-amino-acid chain; its full sequence is Lipoprotein signal peptidase (186 aa).

The next 3 helical transmembrane spans lie at 11 to 31 (WIPL…KLLV), 44 to 64 (VLGD…FSIG), and 70 to 90 (VLRT…IVFS). Catalysis depends on residues aspartate 128 and aspartate 150. Residues 145–165 (AFNIADAVIMTCGLLLIISFI) traverse the membrane as a helical segment.

The protein belongs to the peptidase A8 family.

It localises to the cell inner membrane. It carries out the reaction Release of signal peptides from bacterial membrane prolipoproteins. Hydrolyzes -Xaa-Yaa-Zaa-|-(S,diacylglyceryl)Cys-, in which Xaa is hydrophobic (preferably Leu), and Yaa (Ala or Ser) and Zaa (Gly or Ala) have small, neutral side chains.. The protein operates within protein modification; lipoprotein biosynthesis (signal peptide cleavage). In terms of biological role, this protein specifically catalyzes the removal of signal peptides from prolipoproteins. This Treponema pallidum (strain Nichols) protein is Lipoprotein signal peptidase.